The sequence spans 287 residues: Bifunctional protein FolD (287 aa).

Residues 166–168 and isoleucine 232 contribute to the NADP(+) site; that span reads GAS.

It belongs to the tetrahydrofolate dehydrogenase/cyclohydrolase family. In terms of assembly, homodimer.

The enzyme catalyses (6R)-5,10-methylene-5,6,7,8-tetrahydrofolate + NADP(+) = (6R)-5,10-methenyltetrahydrofolate + NADPH. The catalysed reaction is (6R)-5,10-methenyltetrahydrofolate + H2O = (6R)-10-formyltetrahydrofolate + H(+). Its pathway is one-carbon metabolism; tetrahydrofolate interconversion. Functionally, catalyzes the oxidation of 5,10-methylenetetrahydrofolate to 5,10-methenyltetrahydrofolate and then the hydrolysis of 5,10-methenyltetrahydrofolate to 10-formyltetrahydrofolate. This Aeromonas salmonicida (strain A449) protein is Bifunctional protein FolD.